We begin with the raw amino-acid sequence, 512 residues long: Activin receptor type-2B (512 aa).

The signal sequence occupies residues 1-18; sequence MTAPWVALALLWGSLCAG. Residues 19–137 are Extracellular-facing; it reads SGRGEAETRE…PPPTAPTLLT (119 aa). Cystine bridges form between C29–C59, C49–C77, C84–C103, C90–C102, and C104–C109. N-linked (GlcNAc...) asparagine glycans are attached at residues N42 and N65. A helical membrane pass occupies residues 138 to 158; it reads VLAYSLLPIGGLSLIVLLAFW. The Cytoplasmic segment spans residues 159–512; that stretch reads MYRHRKPPYG…VDLPPKESSI (354 aa). Residues 190 to 480 form the Protein kinase domain; it reads LQLLEIKARG…AGCVEERVSL (291 aa). ATP contacts are provided by residues 196 to 204 and K217; that span reads KARGRFGCV. Residue D321 is the Proton acceptor of the active site. Residues 491-512 are interaction with DYNLT1; it reads DCLVSLVTSVTNVDLPPKESSI.

Belongs to the protein kinase superfamily. TKL Ser/Thr protein kinase family. TGFB receptor subfamily. In terms of assembly, forms an activin receptor complex with activin type II receptors such as ACVR1B. Interacts with VPS39. Interacts with DYNLT1. Interacts with BMP3. Interacts with BMP2. Interacts with BMP6. Mg(2+) serves as cofactor. Mn(2+) is required as a cofactor. Post-translationally, phosphorylated. Constitutive phosphorylation is in part catalyzed by its own kinase activity.

The protein resides in the cell membrane. The enzyme catalyses L-threonyl-[receptor-protein] + ATP = O-phospho-L-threonyl-[receptor-protein] + ADP + H(+). The catalysed reaction is L-seryl-[receptor-protein] + ATP = O-phospho-L-seryl-[receptor-protein] + ADP + H(+). In terms of biological role, transmembrane serine/threonine kinase activin type-2 receptor forming an activin receptor complex with activin type-1 serine/threonine kinase receptors (ACVR1, ACVR1B or ACVR1c). Transduces the activin signal from the cell surface to the cytoplasm and is thus regulating many physiological and pathological processes including neuronal differentiation and neuronal survival, hair follicle development and cycling, FSH production by the pituitary gland, wound healing, extracellular matrix production, immunosuppression and carcinogenesis. Activin is also thought to have a paracrine or autocrine role in follicular development in the ovary. Within the receptor complex, the type-2 receptors act as a primary activin receptors (binds activin-A/INHBA, activin-B/INHBB as well as inhibin-A/INHA-INHBA). The type-1 receptors like ACVR1B act as downstream transducers of activin signals. Activin binds to type-2 receptor at the plasma membrane and activates its serine-threonine kinase. The activated receptor type-2 then phosphorylates and activates the type-1 receptor. Once activated, the type-1 receptor binds and phosphorylates the SMAD proteins SMAD2 and SMAD3, on serine residues of the C-terminal tail. Soon after their association with the activin receptor and subsequent phosphorylation, SMAD2 and SMAD3 are released into the cytoplasm where they interact with the common partner SMAD4. This SMAD complex translocates into the nucleus where it mediates activin-induced transcription. Inhibitory SMAD7, which is recruited to ACVR1B through FKBP1A, can prevent the association of SMAD2 and SMAD3 with the activin receptor complex, thereby blocking the activin signal. Activin signal transduction is also antagonized by the binding to the receptor of inhibin-B via the IGSF1 inhibin coreceptor. The protein is Activin receptor type-2B (ACVR2B) of Homo sapiens (Human).